Here is a 430-residue protein sequence, read N- to C-terminus: S-adenosylmethionine synthase (430 aa).

ATP is bound at residue His14. Position 16 (Asp16) interacts with Mg(2+). Glu42 is a K(+) binding site. Positions 55 and 98 each coordinate L-methionine. The interval 98-108 (QSPDINRGVER) is flexible loop. Residues 164-166 (DAK), 254-255 (KF), Asp263, 269-270 (RK), Ala286, and Lys290 each bind ATP. Asp263 contacts L-methionine. Lys294 is a binding site for L-methionine.

This sequence belongs to the AdoMet synthase family. In terms of assembly, homotetramer; dimer of dimers. Requires Mg(2+) as cofactor. K(+) serves as cofactor.

It is found in the cytoplasm. It catalyses the reaction L-methionine + ATP + H2O = S-adenosyl-L-methionine + phosphate + diphosphate. It functions in the pathway amino-acid biosynthesis; S-adenosyl-L-methionine biosynthesis; S-adenosyl-L-methionine from L-methionine: step 1/1. In terms of biological role, catalyzes the formation of S-adenosylmethionine (AdoMet) from methionine and ATP. The overall synthetic reaction is composed of two sequential steps, AdoMet formation and the subsequent tripolyphosphate hydrolysis which occurs prior to release of AdoMet from the enzyme. This chain is S-adenosylmethionine synthase, found in Bacteroides thetaiotaomicron (strain ATCC 29148 / DSM 2079 / JCM 5827 / CCUG 10774 / NCTC 10582 / VPI-5482 / E50).